We begin with the raw amino-acid sequence, 827 residues long: Tuftelin-interacting protein 11 (827 aa).

2 disordered regions span residues 31–129 (FNPH…KGFV) and 179–203 (QRKG…DFPV). Basic and acidic residues predominate over residues 41–60 (TKEEATYGVWAERDSDEERP). The segment covering 88 to 98 (DVSDEDSDEDE) has biased composition (acidic residues). The segment covering 99-112 (KPVKQEEIPKEFVP) has biased composition (basic and acidic residues). The region spanning 145-191 (TKGIGQKLLQKMGYVPGRGLGKNAQGIINPIEAKQRKGKGAVGAYGS) is the G-patch domain.

This sequence belongs to the TFP11/STIP family. Identified in the spliceosome C complex.

Its subcellular location is the nucleus. Functionally, involved in pre-mRNA splicing, specifically in spliceosome disassembly during late-stage splicing events. The protein is Tuftelin-interacting protein 11 (TFIP11) of Gallus gallus (Chicken).